Consider the following 241-residue polypeptide: Large ribosomal subunit protein uL1 (241 aa).

It belongs to the universal ribosomal protein uL1 family. In terms of assembly, part of the 50S ribosomal subunit.

Functionally, binds directly to 23S rRNA. The L1 stalk is quite mobile in the ribosome, and is involved in E site tRNA release. Protein L1 is also a translational repressor protein, it controls the translation of the L11 operon by binding to its mRNA. The protein is Large ribosomal subunit protein uL1 of Streptomyces coelicolor (strain ATCC BAA-471 / A3(2) / M145).